Here is a 395-residue protein sequence, read N- to C-terminus: Acid ceramidase (395 aa).

The signal sequence occupies residues 1-21 (MPGRSCVALVLLAAAVSCAVA). Cys-31 and Cys-340 are joined by a disulfide. Cys-143 acts as the Nucleophile in catalysis. N-linked (GlcNAc...) asparagine glycans are attached at residues Asn-173, Asn-195, Asn-259, Asn-286, Asn-342, and Asn-348. A disulfide bridge connects residues Cys-388 and Cys-392.

The protein belongs to the acid ceramidase family. As to quaternary structure, heterodimer; disulfide-linked. The heterodimer is composed of the disulfide-linked alpha and beta chains produced by autocatalytic cleavage of the precursor. Isoform 2: May interact with NR5A1 in the nucleus; the direct interaction would negatively regulate NR5A1 transcriptional activity. N-glycosylated. Post-translationally, proteolytically cleaved into two chains alpha and beta that remain associated via a disulfide bond. Cleavage gives rise to a conformation change that activates the enzyme. The same catalytic Cys residue mediates the autoproteolytic cleavage and subsequent hydrolysis of lipid substrates. The beta chain may undergo an additional C-terminal processing. Broadly expressed with higher expression in heart.

It is found in the lysosome. Its subcellular location is the secreted. It localises to the nucleus. The protein localises to the cytoplasm. The catalysed reaction is an N-acylsphing-4-enine + H2O = sphing-4-enine + a fatty acid. The enzyme catalyses a beta-D-glucosyl-(1&lt;-&gt;1')-N-acylsphing-4-enine + H2O = beta-D-glucosyl-(1&lt;-&gt;1)-sphing-4-enine + a fatty acid. It carries out the reaction a globoside Gb3Cer + H2O = a lysoGb3 + a fatty acid. It catalyses the reaction a globoside Gb3Cer (d18:1(4E)) + H2O = a lysoGb3(d18:1(4E)) + a fatty acid. The catalysed reaction is N-dodecanoylsphing-4-enine + H2O = dodecanoate + sphing-4-enine. The enzyme catalyses N-tetradecanoylsphing-4-enine + H2O = tetradecanoate + sphing-4-enine. It carries out the reaction N-hexadecanoylsphing-4-enine + H2O = sphing-4-enine + hexadecanoate. It catalyses the reaction N-octadecanoylsphing-4-enine + H2O = sphing-4-enine + octadecanoate. The catalysed reaction is N-dodecanoyl-(4R)-hydroxysphinganine + H2O = (4R)-hydroxysphinganine + dodecanoate. The enzyme catalyses N-(dodecanoyl)-sphinganine + H2O = dodecanoate + sphinganine. It carries out the reaction N-(acetyl)-sphing-4-enine + H2O = sphing-4-enine + acetate. It catalyses the reaction N-(hexanoyl)sphing-4-enine + H2O = hexanoate + sphing-4-enine. The catalysed reaction is N-octanoylsphing-4-enine + H2O = octanoate + sphing-4-enine. The enzyme catalyses N-(9Z-octadecenoyl)-sphing-4-enine + H2O = sphing-4-enine + (9Z)-octadecenoate. It carries out the reaction N-dodecanoylethanolamine + H2O = dodecanoate + ethanolamine. It functions in the pathway lipid metabolism; sphingolipid metabolism. Its activity is regulated as follows. Activated by Ca(2+), Mg(2+) and Na(+) cations. Inhibited by Zn(2+). Phosphatidylserine and phosphatidic acid stimulate while cardiolipin, phosphatidylcholine, lysophosphatidylcholine, phosphatidylethanolamine, phosphatidylinositol and sphingomyelin inhibit the reverse ceramide synthase activity. Phosphatidic acid, phosphatidylinositol and C16-ceramide inhibit the ceramidase/hydrolase activity. Functionally, lysosomal ceramidase that hydrolyzes sphingolipid ceramides into sphingosine and free fatty acids at acidic pH. Ceramides, sphingosine, and its phosphorylated form sphingosine-1-phosphate are bioactive lipids that mediate cellular signaling pathways regulating several biological processes including cell proliferation, apoptosis and differentiation. Has a higher catalytic efficiency towards C12-ceramides versus other ceramides. Also catalyzes the reverse reaction allowing the synthesis of ceramides from fatty acids and sphingosine. For the reverse synthetic reaction, the natural sphingosine D-erythro isomer is more efficiently utilized as a substrate compared to D-erythro-dihydrosphingosine and D-erythro-phytosphingosine, while the fatty acids with chain lengths of 12 or 14 carbons are the most efficiently used. Also has an N-acylethanolamine hydrolase activity. By regulating the levels of ceramides, sphingosine and sphingosine-1-phosphate in the epidermis, mediates the calcium-induced differentiation of epidermal keratinocytes. Also indirectly regulates tumor necrosis factor/TNF-induced apoptosis. By regulating the intracellular balance between ceramides and sphingosine, in adrenocortical cells, probably also acts as a regulator of steroidogenesis. Its function is as follows. May directly regulate steroidogenesis by binding the nuclear receptor NR5A1 and negatively regulating its transcriptional activity. This is Acid ceramidase from Homo sapiens (Human).